The following is a 295-amino-acid chain: ATP synthase gamma chain (295 aa).

It belongs to the ATPase gamma chain family. In terms of assembly, F-type ATPases have 2 components, CF(1) - the catalytic core - and CF(0) - the membrane proton channel. CF(1) has five subunits: alpha(3), beta(3), gamma(1), delta(1), epsilon(1). CF(0) has three main subunits: a, b and c.

The protein localises to the cell inner membrane. In terms of biological role, produces ATP from ADP in the presence of a proton gradient across the membrane. The gamma chain is believed to be important in regulating ATPase activity and the flow of protons through the CF(0) complex. In Paraburkholderia phymatum (strain DSM 17167 / CIP 108236 / LMG 21445 / STM815) (Burkholderia phymatum), this protein is ATP synthase gamma chain.